The sequence spans 409 residues: uncharacterized protein (409 aa).

Residues His-36–Arg-50 are compositionally biased toward basic and acidic residues. Disordered stretches follow at residues His-36 to Ser-67, Ile-239 to Ile-298, and Arg-338 to Arg-373. Residues Pro-51–Ser-67 are compositionally biased toward low complexity. Positions Val-245–Pro-265 are enriched in basic and acidic residues. The segment covering Leu-268 to Lys-281 has biased composition (polar residues). Composition is skewed to basic and acidic residues over residues Asn-282–Asp-294 and Arg-338–Arg-350.

This is an uncharacterized protein from Homo sapiens (Human).